The primary structure comprises 161 residues: ATP synthase subunit b (161 aa).

A helical membrane pass occupies residues 10-29 (SVIQLMSFFLLLYILKKFLY).

Belongs to the ATPase B chain family. In terms of assembly, F-type ATPases have 2 components, F(1) - the catalytic core - and F(0) - the membrane proton channel. F(1) has five subunits: alpha(3), beta(3), gamma(1), delta(1), epsilon(1). F(0) has three main subunits: a(1), b(2) and c(10-14). The alpha and beta chains form an alternating ring which encloses part of the gamma chain. F(1) is attached to F(0) by a central stalk formed by the gamma and epsilon chains, while a peripheral stalk is formed by the delta and b chains.

The protein localises to the cell inner membrane. Its function is as follows. F(1)F(0) ATP synthase produces ATP from ADP in the presence of a proton or sodium gradient. F-type ATPases consist of two structural domains, F(1) containing the extramembraneous catalytic core and F(0) containing the membrane proton channel, linked together by a central stalk and a peripheral stalk. During catalysis, ATP synthesis in the catalytic domain of F(1) is coupled via a rotary mechanism of the central stalk subunits to proton translocation. Functionally, component of the F(0) channel, it forms part of the peripheral stalk, linking F(1) to F(0). The polypeptide is ATP synthase subunit b (Thermosipho melanesiensis (strain DSM 12029 / CIP 104789 / BI429)).